Here is a 308-residue protein sequence, read N- to C-terminus: MTHLFALSELPLDEIHRLLDEAERFRSGRIWRPAAPMYVANLFFEPSTRTKCSFEMAERKLGLHVIPFDPERSSVQKGETLYDTVRTLEAIGVDAVVIRHHEDAYFEALRHAVGIPIINAGDGCGHHPTQSLLDLLTIRQEFGAFTGLTVAIIGDIRHSRVARSNAEVLTRLGANVLFSGPEEWKDETNPYGTYVEVDEAIARADVVMLLRIQHERHAETMGLTKEEYHARYGLTLERARRMKSGAIILHPAPVNRGVEIASELVEAKASRIFKQMENGVYVRMAVLKRAMEGRMEHGRMAEKWHVVQ.

Residues Arg49 and Thr50 each coordinate carbamoyl phosphate. Lys77 is a binding site for L-aspartate. Carbamoyl phosphate contacts are provided by Arg99, His127, and Gln130. Positions 160 and 211 each coordinate L-aspartate. Carbamoyl phosphate is bound by residues Ala252 and Pro253.

Belongs to the aspartate/ornithine carbamoyltransferase superfamily. ATCase family. In terms of assembly, heterododecamer (2C3:3R2) of six catalytic PyrB chains organized as two trimers (C3), and six regulatory PyrI chains organized as three dimers (R2).

It catalyses the reaction carbamoyl phosphate + L-aspartate = N-carbamoyl-L-aspartate + phosphate + H(+). Its pathway is pyrimidine metabolism; UMP biosynthesis via de novo pathway; (S)-dihydroorotate from bicarbonate: step 2/3. Functionally, catalyzes the condensation of carbamoyl phosphate and aspartate to form carbamoyl aspartate and inorganic phosphate, the committed step in the de novo pyrimidine nucleotide biosynthesis pathway. This chain is Aspartate carbamoyltransferase catalytic subunit, found in Bacillus caldolyticus.